Here is a 138-residue protein sequence, read N- to C-terminus: Basic phospholipase A2 homolog Ts-K49a (138 aa).

A signal peptide spans 1–16 (MRTLWIMAVLLLGVEG). 7 cysteine pairs are disulfide-bonded: C42-C131, C44-C60, C59-C111, C65-C138, C66-C104, C73-C97, and C91-C102. An important for membrane-damaging activities in eukaryotes and bacteria; heparin-binding region spans residues 121–133 (KKKKINLKLFCKK).

Expressed by the venom gland.

The protein resides in the secreted. Its function is as follows. Snake venom phospholipase A2 homolog that lacks catalytic activity. It shows myotoxic and weak anticoagulant activities and induces local edema a few hours after injection (5-10 ug) in the hind paw. A model of myotoxic mechanism has been proposed: an apo Lys49-PLA2 is activated by the entrance of a hydrophobic molecule (e.g. fatty acid) at the hydrophobic channel of the protein leading to a reorientation of a monomer. This reorientation causes a transition between 'inactive' to 'active' states, causing alignment of C-terminal and membrane-docking sites (MDoS) side-by-side and putting the membrane-disruption sites (MDiS) in the same plane, exposed to solvent and in a symmetric position for both monomers. The MDoS region stabilizes the toxin on membrane by the interaction of charged residues with phospholipid head groups. Subsequently, the MDiS region destabilizes the membrane with penetration of hydrophobic residues. This insertion causes a disorganization of the membrane, allowing an uncontrolled influx of ions (i.e. calcium and sodium), and eventually triggering irreversible intracellular alterations and cell death. The sequence is that of Basic phospholipase A2 homolog Ts-K49a from Trimeresurus stejnegeri (Chinese green tree viper).